Reading from the N-terminus, the 84-residue chain is MALLDYLLGQKKKKSANLAKDRLQILLAHERSERSAPEYLPKMREEILAVISKYVTIDQEQLQISIDEANGFEVLELNLVLPDK.

The protein belongs to the MinE family.

Prevents the cell division inhibition by proteins MinC and MinD at internal division sites while permitting inhibition at polar sites. This ensures cell division at the proper site by restricting the formation of a division septum at the midpoint of the long axis of the cell. The polypeptide is Cell division topological specificity factor (Hydrogenovibrio crunogenus (strain DSM 25203 / XCL-2) (Thiomicrospira crunogena)).